A 432-amino-acid polypeptide reads, in one-letter code: Protein arginine N-methyltransferase 2 (432 aa).

Over residues 1–11 (MESSSECSSIS) the composition is skewed to low complexity. Residues 1 to 22 (MESSSECSSISDFQDSTEGDDA) form a disordered region. One can recognise an SH3 domain in the interval 29-88 (LCMREYVVICDYVATDNTQLSLCSGDKVLLLNAVSQDWWWVNHNGTCGYVPASHLHDALN). In terms of domain architecture, SAM-dependent MTase PRMT-type spans 101-405 (DEEYYGSYKT…FERNSVWRRH (305 aa)). S-adenosyl-L-methionine-binding residues include His114, Arg123, Gly147, Glu170, and Glu199. Catalysis depends on residues Glu213 and Glu222.

Belongs to the class I-like SAM-binding methyltransferase superfamily. Protein arginine N-methyltransferase family. In terms of assembly, interacts with ctnnb1.

It localises to the cytoplasm. The protein resides in the nucleus. The catalysed reaction is L-arginyl-[protein] + 2 S-adenosyl-L-methionine = N(omega),N(omega)-dimethyl-L-arginyl-[protein] + 2 S-adenosyl-L-homocysteine + 2 H(+). Its function is as follows. Arginine methyltransferase that methylates the guanidino nitrogens of arginyl residues in proteins such as histones. Involved in growth regulation. Involved in embryonic dorsal development. This Xenopus laevis (African clawed frog) protein is Protein arginine N-methyltransferase 2 (prmt2).